The following is a 136-amino-acid chain: uncharacterized protein (136 aa).

Belongs to the MG439/MG440 family.

This is an uncharacterized protein from Mycoplasma pneumoniae (strain ATCC 29342 / M129 / Subtype 1) (Mycoplasmoides pneumoniae).